Consider the following 90-residue polypeptide: UPF0729 protein Bm1_03610 (90 aa).

It belongs to the UPF0729 family.

In Brugia malayi (Filarial nematode worm), this protein is UPF0729 protein Bm1_03610.